The primary structure comprises 72 residues: Multiple antibiotic resistance protein MarB (72 aa).

The polypeptide is Multiple antibiotic resistance protein MarB (marB) (Escherichia coli (strain K12)).